We begin with the raw amino-acid sequence, 198 residues long: Imidazoleglycerol-phosphate dehydratase (198 aa).

The protein belongs to the imidazoleglycerol-phosphate dehydratase family.

The protein resides in the cytoplasm. The enzyme catalyses D-erythro-1-(imidazol-4-yl)glycerol 3-phosphate = 3-(imidazol-4-yl)-2-oxopropyl phosphate + H2O. It functions in the pathway amino-acid biosynthesis; L-histidine biosynthesis; L-histidine from 5-phospho-alpha-D-ribose 1-diphosphate: step 6/9. This is Imidazoleglycerol-phosphate dehydratase from Agrobacterium fabrum (strain C58 / ATCC 33970) (Agrobacterium tumefaciens (strain C58)).